A 484-amino-acid chain; its full sequence is Ribosomal RNA small subunit methyltransferase F (484 aa).

S-adenosyl-L-methionine is bound by residues 126-132 (AAAPGSK), Glu150, Asp177, and Asp195. The active-site Nucleophile is the Cys248.

It belongs to the class I-like SAM-binding methyltransferase superfamily. RsmB/NOP family.

Its subcellular location is the cytoplasm. The catalysed reaction is cytidine(1407) in 16S rRNA + S-adenosyl-L-methionine = 5-methylcytidine(1407) in 16S rRNA + S-adenosyl-L-homocysteine + H(+). In terms of biological role, specifically methylates the cytosine at position 1407 (m5C1407) of 16S rRNA. The polypeptide is Ribosomal RNA small subunit methyltransferase F (Pectobacterium carotovorum subsp. carotovorum (strain PC1)).